We begin with the raw amino-acid sequence, 1088 residues long: Exportin-T (1088 aa).

The span at 435 to 503 shows a compositional bias: low complexity; sequence KNNNNKNKNT…VKNANNIKNN (69 aa). Disordered regions lie at residues 435–513 and 1059–1088; these read KNNN…DDDD and LNNNNNINNNNNNINNNGHTNGNGVNKNGH.

This sequence belongs to the exportin family.

The protein resides in the nucleus. The protein localises to the cytoplasm. Its function is as follows. Mediates the nuclear export of aminoacylated tRNAs. The chain is Exportin-T (xpot) from Dictyostelium discoideum (Social amoeba).